The following is a 154-amino-acid chain: Anaerobic ribonucleoside-triphosphate reductase-activating protein (154 aa).

[4Fe-4S] cluster contacts are provided by Cys-26, Cys-30, and Cys-33. S-adenosyl-L-methionine is bound by residues 32–34 and Gly-74; that span reads GCY.

Belongs to the organic radical-activating enzymes family. In terms of assembly, forms a tetramer composed of two NrdD and two NrdG subunits. [4Fe-4S] cluster is required as a cofactor.

Its subcellular location is the cytoplasm. The enzyme catalyses glycyl-[protein] + reduced [flavodoxin] + S-adenosyl-L-methionine = glycin-2-yl radical-[protein] + semiquinone [flavodoxin] + 5'-deoxyadenosine + L-methionine + H(+). Activation of anaerobic ribonucleoside-triphosphate reductase under anaerobic conditions by generation of an organic free radical, using S-adenosylmethionine and reduced flavodoxin as cosubstrates to produce 5'-deoxy-adenosine. The chain is Anaerobic ribonucleoside-triphosphate reductase-activating protein (nrdG) from Salmonella typhi.